Here is a 249-residue protein sequence, read N- to C-terminus: Aquaporin (249 aa).

Over 1–11 the chain is Cytoplasmic; sequence MTRKWIKKLQS. The chain crosses the membrane as a helical span at residues 12–32; sequence YIGEFFASFIFGFAVYTSIIG. The Extracellular segment spans residues 33–39; that stretch reads SAQTGQS. A helical membrane pass occupies residues 40 to 60; the sequence is AGPIIVALTIALSGVAIIYSF. Residues 61 to 83 are Cytoplasmic-facing; sequence CDITVAHFNPAITFSAMCFRRLP. An NPA motif is present at residues 69–71; sequence NPA. The helical transmembrane segment at 84–104 threads the bilayer; the sequence is FFGGIFIIIFQVAGFIIAGLA. Residues 105 to 133 are Extracellular-facing; the sequence is SVAVLPGKYKNKLEIARPKRVADNVSRGR. Residues 134 to 154 form a helical membrane-spanning segment; the sequence is IFGTEFFLTAILVYVAFAVGV. The Cytoplasmic portion of the chain corresponds to 155–179; that stretch reads NPYTPPKDEHGDQLDPDEGLTEGRK. The helical transmembrane segment at 180–200 threads the bilayer; that stretch reads ITAPLAIGFTLGFCALLGIAS. Residues 201–223 are Extracellular-facing; the sequence is SGGAFNPGIVLSPMILTGTWDFW. The NPG motif lies at 206-208; it reads NPG. A helical membrane pass occupies residues 224–246; sequence WVYLLGQFSGGLLGGGLQRFLLY. The Cytoplasmic segment spans residues 247-249; that stretch reads KIF.

Belongs to the MIP/aquaporin (TC 1.A.8) family.

Its subcellular location is the cell membrane. Functionally, water channel required to facilitate the transport of water across membranes. Involved in osmotolerance. This chain is Aquaporin (AQP), found in Vairimorpha ceranae (strain BRL01) (Microsporidian parasite).